We begin with the raw amino-acid sequence, 206 residues long: Ribosomal RNA small subunit methyltransferase G (206 aa).

Residues G73, L78, 124-125 (VE), and R139 contribute to the S-adenosyl-L-methionine site.

This sequence belongs to the methyltransferase superfamily. RNA methyltransferase RsmG family.

It is found in the cytoplasm. The enzyme catalyses guanosine(527) in 16S rRNA + S-adenosyl-L-methionine = N(7)-methylguanosine(527) in 16S rRNA + S-adenosyl-L-homocysteine. Functionally, specifically methylates the N7 position of guanine in position 527 of 16S rRNA. The sequence is that of Ribosomal RNA small subunit methyltransferase G from Sodalis glossinidius (strain morsitans).